A 162-amino-acid chain; its full sequence is MFRAIAIIRAHEVIDAVPASHIVLERDERHLRRKAITLENGEKILADFAEPVVLEHGDRLVLDDGREIEIRAASEELYEIRGRDPRHIAELAWHIGNRHLAAQIETDRIFILRDHVIRVMLEGLGATVTDVVAIFSPLRGAYSGGHQHHHGHDHDHHHPDHE.

A disordered region spans residues 143 to 162 (SGGHQHHHGHDHDHHHPDHE). The segment covering 152-162 (HDHDHHHPDHE) has biased composition (basic and acidic residues).

The protein belongs to the UreE family.

The protein localises to the cytoplasm. Functionally, involved in urease metallocenter assembly. Binds nickel. Probably functions as a nickel donor during metallocenter assembly. The protein is Urease accessory protein UreE 1 of Brucella suis biovar 1 (strain 1330).